The sequence spans 505 residues: 2-isopropylmalate synthase (505 aa).

The region spanning 5 to 269 is the Pyruvate carboxyltransferase domain; sequence IKIFDTTLRD…ETGIHTEYLY (265 aa). Mn(2+) contacts are provided by Asp14, His204, His206, and Asn240. The tract at residues 393–505 is regulatory domain; it reads SLLYFHTFTG…AVNRFELRKR (113 aa).

This sequence belongs to the alpha-IPM synthase/homocitrate synthase family. LeuA type 1 subfamily. Homodimer. Mn(2+) is required as a cofactor.

The protein resides in the cytoplasm. It carries out the reaction 3-methyl-2-oxobutanoate + acetyl-CoA + H2O = (2S)-2-isopropylmalate + CoA + H(+). It functions in the pathway amino-acid biosynthesis; L-leucine biosynthesis; L-leucine from 3-methyl-2-oxobutanoate: step 1/4. In terms of biological role, catalyzes the condensation of the acetyl group of acetyl-CoA with 3-methyl-2-oxobutanoate (2-ketoisovalerate) to form 3-carboxy-3-hydroxy-4-methylpentanoate (2-isopropylmalate). The polypeptide is 2-isopropylmalate synthase (Sediminispirochaeta smaragdinae (strain DSM 11293 / JCM 15392 / SEBR 4228) (Spirochaeta smaragdinae)).